Here is a 748-residue protein sequence, read N- to C-terminus: Cysteine--tRNA ligase, cytoplasmic (748 aa).

A disordered region spans residues 1-25 (MADSSGQQGKGRRVQPQWSPPAGTQ). A2 is modified (N-acetylalanine). Residue S19 is modified to Phosphoserine. C55 serves as a coordination point for Zn(2+). G56 is an L-cysteine binding site. The 'HIGH' region signature appears at 57–67 (PTVYDASHMGH). A Phosphoserine modification is found at R79. An L-cysteine-binding site is contributed by T96. A 'KIIK' region motif is present at residues 101–104 (KIIK). Phosphoserine is present on residues S305 and S307. Zn(2+)-binding residues include C348, H373, and E377. H373 contributes to the L-cysteine binding site. A 'KMSKS' region motif is present at residues 406 to 410 (KMSKS). K409 contacts ATP. Position 503 is an N6-acetyllysine (K503). Basic and acidic residues predominate over residues 653–679 (EKRRVEEEKRKKKEEAARRKQEQEAAK). The interval 653 to 686 (EKRRVEEEKRKKKEEAARRKQEQEAAKLAKMKIP) is disordered. Position 746 is a phosphoserine (S746).

The protein belongs to the class-I aminoacyl-tRNA synthetase family. Homodimer. The cofactor is Zn(2+).

Its subcellular location is the cytoplasm. The enzyme catalyses tRNA(Cys) + L-cysteine + ATP = L-cysteinyl-tRNA(Cys) + AMP + diphosphate. In terms of biological role, catalyzes the ATP-dependent ligation of cysteine to tRNA(Cys). The sequence is that of Cysteine--tRNA ligase, cytoplasmic from Homo sapiens (Human).